Reading from the N-terminus, the 440-residue chain is MQQVITQTLVDDRFIQISDSKKSEGLATDSTKRQSQEQPIHDKDPIKAATAAMAATPLVKEHQDTWYYPPDIANDLQSINLPAELKGEIFACAWEYTRCVIPNYTNWNRYVAFMRIIIMGIIAEFRGEMVDVTASNNLLGYDLDATLAALFEGTPGHKEMAREYKTFLLITADKASERRDGELFRRYVNALAQSPRHWFRMRDCDALARFTIASALACNDLDDIWFTEDQFEILTEIGDTLYDAVAFYKHRAEGETNSTFAYMPEDLRIKAYSECREILWALDAAWARNPKLANVINFVRFFGGPIHMMMRRYRFVEENLTIGKSETDKVVDQTRKNFKLWNRVDANKRSVLNTQRYKALIARSEELMFPGLAEFLEMGGDGICDKCKYRESYGAELSHQFGGVELCSECRLSWRKYLECFVERATKVFPELKTHFEVPV.

This sequence belongs to the alpha-ionylideneethane synthase family.

It functions in the pathway hormone biosynthesis. Its function is as follows. Alpha-ionylideneethane synthase; part of the gene cluster that mediates the biosynthesis of abscisic acid (ABA), a phytohormone that acts antagonistically toward salicylic acid (SA), jasmonic acid (JA) and ethylene (ETH) signaling, to impede plant defense responses. The first step of the pathway catalyzes the reaction from farnesyl diphosphate to alpha-ionylideneethane performed by the alpha-ionylideneethane synthase aba3 via a three-step reaction mechanism involving 2 neutral intermediates, beta-farnesene and allofarnesene. The cytochrome P450 monooxygenase aba1 might then be involved in the conversion of alpha-ionylideneethane to alpha-ionylideneacetic acid. Alpha-ionylideneacetic acid is further converted to abscisic acid in 2 steps involving the cytochrome P450 monooxygenase aba2 and the short-chain dehydrogenase/reductase aba4, via the intermediates 1'-deoxy-ABA or 1',4'-trans-diol-ABA, depending on the order of action of these 2 enzymes. Aba2 is responsible for the hydroxylation of carbon atom C-1' and aba4 might be involved in the oxidation of the C-4' carbon atom. This chain is Alpha-ionylideneethane synthase aba3, found in Botryotinia fuckeliana (strain B05.10) (Noble rot fungus).